The following is a 342-amino-acid chain: Type II restriction enzyme CviAII (342 aa).

It carries out the reaction Endonucleolytic cleavage of DNA to give specific double-stranded fragments with terminal 5'-phosphates.. Functionally, a P subtype restriction enzyme that recognizes the double-stranded sequence 5'-CATG-3' and cleaves after C-1. The protein is Type II restriction enzyme CviAII (CVIAIIR) of Chlorella (PBCV-1).